The sequence spans 167 residues: Aphrodisin (167 aa).

The first 16 residues, 1–16 (MVKILLLALVFSLAHA), serve as a signal peptide directing secretion. Residue glutamine 17 is modified to Pyrrolidone carboxylic acid. 2 cysteine pairs are disulfide-bonded: cysteine 54–cysteine 58 and cysteine 73–cysteine 165. N-linked (GlcNAc...) asparagine glycosylation is found at asparagine 57 and asparagine 85.

Belongs to the calycin superfamily. Lipocalin family. In terms of tissue distribution, expressed in the vagina, uterus, and Bartholin's glands of female hamsters. Secreted in vaginal discharge.

The protein resides in the secreted. Its function is as follows. Acts as an aphrodisiac pheromone, reliably eliciting copulatory behavior from male hamster. The sequence is that of Aphrodisin from Cricetus cricetus (Black-bellied hamster).